The sequence spans 178 residues: ATP synthase subunit delta (178 aa).

This sequence belongs to the ATPase delta chain family. F-type ATPases have 2 components, F(1) - the catalytic core - and F(0) - the membrane proton channel. F(1) has five subunits: alpha(3), beta(3), gamma(1), delta(1), epsilon(1). F(0) has three main subunits: a(1), b(2) and c(10-14). The alpha and beta chains form an alternating ring which encloses part of the gamma chain. F(1) is attached to F(0) by a central stalk formed by the gamma and epsilon chains, while a peripheral stalk is formed by the delta and b chains.

Its subcellular location is the cell membrane. Its function is as follows. F(1)F(0) ATP synthase produces ATP from ADP in the presence of a proton or sodium gradient. F-type ATPases consist of two structural domains, F(1) containing the extramembraneous catalytic core and F(0) containing the membrane proton channel, linked together by a central stalk and a peripheral stalk. During catalysis, ATP synthesis in the catalytic domain of F(1) is coupled via a rotary mechanism of the central stalk subunits to proton translocation. In terms of biological role, this protein is part of the stalk that links CF(0) to CF(1). It either transmits conformational changes from CF(0) to CF(1) or is implicated in proton conduction. In Streptococcus pyogenes serotype M49 (strain NZ131), this protein is ATP synthase subunit delta.